The following is a 197-amino-acid chain: Ribonuclease HII (197 aa).

Residues 14–197 enclose the RNase H type-2 domain; the sequence is GIIAGVDEVG…RKNFAPIRIL (184 aa). Positions 20, 21, and 112 each coordinate a divalent metal cation.

This sequence belongs to the RNase HII family. Mn(2+) is required as a cofactor. The cofactor is Mg(2+).

The protein resides in the cytoplasm. The catalysed reaction is Endonucleolytic cleavage to 5'-phosphomonoester.. Functionally, endonuclease that specifically degrades the RNA of RNA-DNA hybrids. This chain is Ribonuclease HII, found in Wolbachia pipientis subsp. Culex pipiens (strain wPip).